The following is a 245-amino-acid chain: tRNA pseudouridine synthase A 2 (245 aa).

The Nucleophile role is filled by Asp-53. Tyr-111 is a binding site for substrate.

Belongs to the tRNA pseudouridine synthase TruA family. As to quaternary structure, homodimer.

The catalysed reaction is uridine(38/39/40) in tRNA = pseudouridine(38/39/40) in tRNA. Formation of pseudouridine at positions 38, 39 and 40 in the anticodon stem and loop of transfer RNAs. This Bacillus cereus (strain ATCC 10987 / NRS 248) protein is tRNA pseudouridine synthase A 2.